The chain runs to 63 residues: H/ACA ribonucleoprotein complex subunit 3-like protein (63 aa).

Residues 18-40 (KMDPEGKPTLSAHPARFSPDDKY) form a disordered region.

It belongs to the NOP10 family. As to quaternary structure, component of the small nucleolar ribonucleoprotein particles containing H/ACA-type snoRNAs (H/ACA snoRNPs).

The protein localises to the nucleus. Its subcellular location is the nucleolus. In terms of biological role, required for ribosome biogenesis. Part of a complex which catalyzes pseudouridylation of rRNA. This involves the isomerization of uridine such that the ribose is subsequently attached to C5, instead of the normal N1. Pseudouridine ('psi') residues may serve to stabilize the conformation of rRNAs. This Trypanosoma cruzi protein is H/ACA ribonucleoprotein complex subunit 3-like protein.